A 540-amino-acid chain; its full sequence is Membrane protein insertase YidC (540 aa).

The helical transmembrane segment at 6–26 (NILLIALALVSFLLFQQWQVA) threads the bilayer. Positions 36 to 47 (QAQSSSSLPAPS) are enriched in low complexity. The tract at residues 36–63 (QAQSSSSLPAPSFADELDPVPGQQQASA) is disordered. Helical transmembrane passes span 342–362 (AFIQ…TFIV), 417–437 (LGGC…YWAL), 455–475 (LSAQ…MFLI), and 496–516 (PVMF…YWLV).

Belongs to the OXA1/ALB3/YidC family. Type 1 subfamily. In terms of assembly, interacts with the Sec translocase complex via SecD. Specifically interacts with transmembrane segments of nascent integral membrane proteins during membrane integration.

The protein resides in the cell inner membrane. Functionally, required for the insertion and/or proper folding and/or complex formation of integral membrane proteins into the membrane. Involved in integration of membrane proteins that insert both dependently and independently of the Sec translocase complex, as well as at least some lipoproteins. Aids folding of multispanning membrane proteins. This chain is Membrane protein insertase YidC, found in Vibrio parahaemolyticus serotype O3:K6 (strain RIMD 2210633).